A 350-amino-acid chain; its full sequence is MFKVLPFTAIVHPNAITAPRLVVKMSAIATKNAVESFVVKPPAHPTYDLKGVIQLALSEDAGDIGDVTCKATIPIDMESEAHFLAKEDGIVAGIALAEMIFAEVDPSLKMEWSINDGDKVHKGLKFGKVQGKAHSIVIAERVVLNFMQRMSGIATLTKAMADAAHPATILETRKTAPGLRLVDKWAVLIGGGKNHRMGLFDMVMIKDNHISAAGGVSKALNSVDQYLEQNKLQMGVEVETRTIAEVHEVLEYASQTKTSLTRIMLDNMVVPLSNGDIEVSMLEEAVDLINGRFETEASGNVTLETVHKIGQTGVTYISSGALTHSVKALDISLKIDTELALEVGRRTKRA.

Substrate-binding positions include arginine 141, 172 to 174 (TRK), arginine 196, lysine 206, glutamate 239, aspartate 266, 298 to 300 (SGN), and 319 to 321 (SGA).

This sequence belongs to the NadC/ModD family.

The catalysed reaction is nicotinate beta-D-ribonucleotide + CO2 + diphosphate = quinolinate + 5-phospho-alpha-D-ribose 1-diphosphate + 2 H(+). It functions in the pathway alkaloid biosynthesis; nicotine biosynthesis. It participates in cofactor biosynthesis; NAD(+) biosynthesis; nicotinate D-ribonucleotide from quinolinate: step 1/1. In terms of biological role, involved in the biosynthesis of pyridine alkaloid natural products, leading mainly to the production of anabasine, anatabine, nicotine and nornicotine, effective deterrents against herbivores with antiparasitic and pesticide properties (neurotoxins); nornicotine serves as the precursor in the synthesis of the carcinogen compound N'-nitrosonornicotine (NNN). Involved in the catabolism of quinolinic acid (QA). This Nicotiana tabacum (Common tobacco) protein is Quinolinate phosphoribosyltransferase [decarboxylating] 1b.